A 358-amino-acid chain; its full sequence is Feruloyl esterase B (358 aa).

Residues 1–18 (MAIPLVLLLAWLLPTVFA) form the signal peptide. The tract at residues 19–291 (ASLTQVSNFG…VSVVLDWFGI (273 aa)) is catalytic. S136 acts as the Charge relay system in catalysis. N-linked (GlcNAc...) asparagine glycosylation is found at N179 and N246. Positions 292 to 321 (TGGGGGNGGGSGSTTTTTSATTTSTGPTGG) are gly/Thr-rich linker. The interval 297-318 (GNGGGSGSTTTTTSATTTSTGP) is disordered. Residues 304–318 (STTTTTSATTTSTGP) show a composition bias toward low complexity. The region spanning 322–358 (CTAAHWDQCGGNGYTGCTSCASPYTCQKVNDYYSQCL) is the CBM1 domain.

It belongs to the carbohydrate esterase 1 (CE1) family. Feruloyl esterase type B subfamily.

The protein resides in the secreted. The catalysed reaction is feruloyl-polysaccharide + H2O = ferulate + polysaccharide.. Its function is as follows. Involved in degradation of plant cell walls. Hydrolyzes the feruloyl-arabinose ester bond in arabinoxylans as well as the feruloyl-galactose and feruloyl-arabinose ester bonds in pectin. Active against methyl esters of caffeate (MCA), but not sinapate (MSA). This Talaromyces stipitatus (strain ATCC 10500 / CBS 375.48 / QM 6759 / NRRL 1006) (Penicillium stipitatum) protein is Feruloyl esterase B (faeB).